Reading from the N-terminus, the 471-residue chain is Argininosuccinate lyase (471 aa).

This sequence belongs to the lyase 1 family. Argininosuccinate lyase subfamily.

Its subcellular location is the cytoplasm. It catalyses the reaction 2-(N(omega)-L-arginino)succinate = fumarate + L-arginine. Its pathway is amino-acid biosynthesis; L-arginine biosynthesis; L-arginine from L-ornithine and carbamoyl phosphate: step 3/3. The sequence is that of Argininosuccinate lyase from Cereibacter sphaeroides (strain ATCC 17025 / ATH 2.4.3) (Rhodobacter sphaeroides).